We begin with the raw amino-acid sequence, 237 residues long: Chalcone--flavanone isomerase (237 aa).

Thr50 and Ser192 together coordinate substrate.

This sequence belongs to the chalcone isomerase family.

It carries out the reaction a chalcone = a flavanone.. It participates in secondary metabolite biosynthesis; flavonoid biosynthesis. Its function is as follows. Catalyzes the intramolecular cyclization of bicyclic chalcones into tricyclic (S)-flavanones. Responsible for the isomerization of 4,2',4',6'-tetrahydroxychalcone (also termed chalcone) into naringenin. This Callistephus chinensis (China aster) protein is Chalcone--flavanone isomerase (CHI).